Consider the following 230-residue polypeptide: MGQKVHPNGIRLGITKPWISTWYADKSDYANNLNSDWEVRKFLVEKLQAASVSKIVIERPAKSIRVTIHTARPGVVIGKKGEDVEVLRAAVSKLAGTPAQINIAEIRKPELDAKLVADSIAQQLERRVMFRRAMKRAVQNAMRIGAQGIKVQVSGRLGGAEIARDEWYREGRVPLHTLRADIDYSTSESHTQYGVIGVKVWIFKGEVLDGMLPQIEEPKQQQPKRKPRGK.

The KH type-2 domain occupies valine 39 to arginine 107.

This sequence belongs to the universal ribosomal protein uS3 family. Part of the 30S ribosomal subunit. Forms a tight complex with proteins S10 and S14.

Its function is as follows. Binds the lower part of the 30S subunit head. Binds mRNA in the 70S ribosome, positioning it for translation. This chain is Small ribosomal subunit protein uS3, found in Shewanella putrefaciens (strain CN-32 / ATCC BAA-453).